We begin with the raw amino-acid sequence, 320 residues long: ATP-dependent 6-phosphofructokinase (320 aa).

Position 12 (G12) interacts with ATP. Residues 22 to 26 (RGVVR) and 55 to 60 (RYSVSD) each bind ADP. ATP is bound by residues 73 to 74 (RF) and 103 to 106 (GDGS). A Mg(2+)-binding site is contributed by D104. Substrate is bound at residue 126–128 (TID). Residue D128 is the Proton acceptor of the active site. Residue R155 participates in ADP binding. Residues R163 and 170–172 (MGR) each bind substrate. ADP contacts are provided by residues 186–188 (GCE), K212, and 214–216 (KKH). Substrate contacts are provided by residues E223, R244, and 250–253 (HIQR).

Belongs to the phosphofructokinase type A (PFKA) family. ATP-dependent PFK group I subfamily. Prokaryotic clade 'B1' sub-subfamily. Homotetramer. Mg(2+) is required as a cofactor.

The protein resides in the cytoplasm. It catalyses the reaction beta-D-fructose 6-phosphate + ATP = beta-D-fructose 1,6-bisphosphate + ADP + H(+). The protein operates within carbohydrate degradation; glycolysis; D-glyceraldehyde 3-phosphate and glycerone phosphate from D-glucose: step 3/4. Allosterically activated by ADP and other diphosphonucleosides, and allosterically inhibited by phosphoenolpyruvate. Catalyzes the phosphorylation of D-fructose 6-phosphate to fructose 1,6-bisphosphate by ATP, the first committing step of glycolysis. The protein is ATP-dependent 6-phosphofructokinase of Klebsiella pneumoniae (strain 342).